The sequence spans 871 residues: Pre-mRNA-processing factor 40 homolog B (871 aa).

WW domains are found at residues 92 to 125 and 133 to 166; these read GPPRALWSEHVAPDGRIYYYNADDKQSVWEKPSV and LLSQCPWKEYKSDTGKPYYYNNQSKESRWTRPKD. At lysine 148 the chain carries N6-acetyllysine. Residues 171–277 are disordered; that stretch reads EVLVKQEAAG…RSGLSWSNRE (107 aa). Lysine 175 participates in a covalent cross-link: Glycyl lysine isopeptide (Lys-Gly) (interchain with G-Cter in SUMO2). Positions 182–191 are enriched in low complexity; that stretch reads QQQQLPQTLQ. Residues 192-211 show a composition bias toward pro residues; it reads PQPPQPQPDPPPVPPGPTPV. Low complexity-rich tracts occupy residues 212–221 and 245–255; these read PTGLLEPEPG and EGPSSSGQHQP. 6 consecutive FF domains span residues 276-330, 340-397, 410-470, 490-550, 554-610, and 625-682; these read REKA…YKAQ, RLRA…VLFF, RRRN…HIRA, QRKN…YVEE, RFHD…LLEK, and RMRR…FLQV. A disordered region spans residues 690–871; the sequence is HLHTKGRKHG…TLLQQLDDHQ (182 aa). Residues 691–711 show a composition bias toward basic residues; the sequence is LHTKGRKHGRKGKKHHHKRSH. Positions 739–756 are enriched in low complexity; the sequence is SESGSEPSSSLDSVESGG. The residue at position 764 (serine 764) is a Phosphoserine. Over residues 777 to 793 the composition is skewed to basic residues; that stretch reads RKAKKPKKKTKKRRHKS. The span at 803 to 824 shows a compositional bias: basic and acidic residues; it reads EEKAGKESDEKEQEQDKDRELQ. At serine 832 the chain carries Phosphoserine. Lysine 838 is covalently cross-linked (Glycyl lysine isopeptide (Lys-Gly) (interchain with G-Cter in SUMO2)). Residue serine 852 is modified to Phosphoserine.

The protein belongs to the PRPF40 family. Interacts with the N-terminus of HD. In terms of tissue distribution, expressed in the striatum and cortex of the brain (at protein level). Highly expressed in testis, fetal kidney and fetal brain. Moderately expressed in pancreas, skeletal muscle, placenta, brain and heart. Weakly expressed in colon, ileum, ovary, prostate, spleen, kidney and fetal lung.

The protein resides in the nucleus speckle. In terms of biological role, may be involved in pre-mRNA splicing. This chain is Pre-mRNA-processing factor 40 homolog B (PRPF40B), found in Homo sapiens (Human).